A 299-amino-acid chain; its full sequence is 4-diphosphocytidyl-2-C-methyl-D-erythritol kinase (299 aa).

Lys19 is a catalytic residue. An ATP-binding site is contributed by 110–120 (PVASGIGGGSA). Asp152 is a catalytic residue.

The protein belongs to the GHMP kinase family. IspE subfamily.

The catalysed reaction is 4-CDP-2-C-methyl-D-erythritol + ATP = 4-CDP-2-C-methyl-D-erythritol 2-phosphate + ADP + H(+). It functions in the pathway isoprenoid biosynthesis; isopentenyl diphosphate biosynthesis via DXP pathway; isopentenyl diphosphate from 1-deoxy-D-xylulose 5-phosphate: step 3/6. In terms of biological role, catalyzes the phosphorylation of the position 2 hydroxy group of 4-diphosphocytidyl-2C-methyl-D-erythritol. The protein is 4-diphosphocytidyl-2-C-methyl-D-erythritol kinase of Agrobacterium fabrum (strain C58 / ATCC 33970) (Agrobacterium tumefaciens (strain C58)).